The sequence spans 493 residues: Probable phospho-2-dehydro-3-deoxyheptonate aldolase, chloroplastic (493 aa).

The transit peptide at 1–58 (MAMSNTSALASKLLPSCKPHQPTLTFFSPSTTCQKKPRSSRPISAAVHVTQPPKTPIS) directs the protein to the chloroplast.

The protein belongs to the class-II DAHP synthase family.

It is found in the plastid. The protein localises to the chloroplast. It catalyses the reaction D-erythrose 4-phosphate + phosphoenolpyruvate + H2O = 7-phospho-2-dehydro-3-deoxy-D-arabino-heptonate + phosphate. The protein operates within metabolic intermediate biosynthesis; chorismate biosynthesis; chorismate from D-erythrose 4-phosphate and phosphoenolpyruvate: step 1/7. In Catharanthus roseus (Madagascar periwinkle), this protein is Probable phospho-2-dehydro-3-deoxyheptonate aldolase, chloroplastic (DHS1).